The primary structure comprises 611 residues: Chaperone protein DnaK (611 aa).

Phosphothreonine; by autocatalysis is present on Thr173. Low complexity predominate over residues 579–592 (AAGQAEGAQGAQDA). A disordered region spans residues 579–611 (AAGQAEGAQGAQDAGAKKDNVVDAEFEEVKEDK). Acidic residues predominate over residues 600-611 (VDAEFEEVKEDK).

The protein belongs to the heat shock protein 70 family.

Functionally, acts as a chaperone. The protein is Chaperone protein DnaK of Bacillus mycoides (strain KBAB4) (Bacillus weihenstephanensis).